Consider the following 386-residue polypeptide: MPHSIPLLRPNPADPVPSYRLPHLIHTYSHLPTRAISHDDASMAYYSLAPIGCNLTEGFERRIEREDEEEHLDGLVESLEWLITRGRKGERKGGIITWRGMLTRLITMPYETRDPWEMTAIALDGSVYLELWDPPEEKAKRKREQSAWEKQGYMGYAYESFSTIPQEGRPGNGPEGWGGDVNTNVQWANVVRSAIGEIPLCIAGEVDCVKAEPGSPNPGLSGCMELKTNKVIQHPGHEAMFHKKLLKHWAQSWLLGIPEVVVGFRDDDGILRSQTTFDTAKIPYLVEVLNKPSWSPNRCLQSLHSVCSFLTKNVLPTDPLVTYPHIRGNRQAVKEAGELPPAVVWRLAFDPKKGCELHAVGEVGVVDGRWGGMLKEEYVRWRMGLE.

Position 34 (Arg-34) interacts with substrate. Position 159 (Glu-159) interacts with a divalent metal cation. Position 205 (Glu-205) interacts with substrate. Residues Asp-207, Glu-225, and Leu-226 each coordinate a divalent metal cation. The substrate site is built by Lys-227 and Gln-251.

It belongs to the DXO/Dom3Z family. In terms of assembly, interacts with RAT1; the interaction is direct, stabilizes RAT1 protein structure and stimulates its exoribonuclease activity. The interaction also stimulates RAI1 pyrophosphohydrolase activity, probably by recruiting it to mRNA substrates. The cofactor is a divalent metal cation.

It localises to the nucleus. It catalyses the reaction a 5'-end NAD(+)-phospho-ribonucleoside in mRNA + H2O = a 5'-end phospho-ribonucleoside in mRNA + NAD(+) + H(+). The enzyme catalyses a 5'-end (N(7)-methyl 5'-triphosphoguanosine)-ribonucleoside-ribonucleotide in mRNA + H2O = a (N(7)-methyl 5'-triphosphoguanosine)-nucleoside + a 5'-end phospho-ribonucleoside in mRNA + H(+). It carries out the reaction a 5'-end triphospho-ribonucleoside in mRNA + H2O = a 5'-end phospho-ribonucleoside in mRNA + diphosphate + H(+). Its function is as follows. Decapping enzyme for NAD-capped RNAs: specifically hydrolyzes the nicotinamide adenine dinucleotide (NAD) cap from a subset of RNAs by removing the entire NAD moiety from the 5'-end of an NAD-capped RNA. The NAD-cap is present at the 5'-end of some RNAs and snoRNAs. In contrast to the canonical 5'-end N7 methylguanosine (m7G) cap, the NAD cap promotes mRNA decay. Also acts as a non-canonical decapping enzyme that removes the entire cap structure of m7G capped or incompletely capped RNAs. Has decapping activity toward incomplete 5'-end m7G cap mRNAs such as unmethylated 5'-end-capped RNA (cap0), while it has no activity toward 2'-O-ribose methylated m7G cap (cap1). Also possesses RNA 5'-pyrophosphohydrolase activity by hydrolyzing the 5'-end triphosphate to release pyrophosphates. Stimulates exoribonuclease activity of Rat1, allowing it to degrade RNAs with stable secondary structure more effectively. The polypeptide is Decapping nuclease RAI1 (RAI1) (Cryptococcus neoformans var. neoformans serotype D (strain B-3501A) (Filobasidiella neoformans)).